A 512-amino-acid polypeptide reads, in one-letter code: Probable cytochrome P450 6d2 (512 aa).

Cys-457 contacts heme.

Belongs to the cytochrome P450 family. It depends on heme as a cofactor.

It localises to the endoplasmic reticulum membrane. It is found in the microsome membrane. Its function is as follows. May be involved in the metabolism of insect hormones and in the breakdown of synthetic insecticides. This Drosophila melanogaster (Fruit fly) protein is Probable cytochrome P450 6d2 (Cyp6d2).